A 293-amino-acid chain; its full sequence is MYYPQPTVSLAAAVALLRPSLRRHSQRASSLLRSSTPPPWVSARRRTAVSDDFFTVELDATGVEPEPDSIDDGLPSPWEGAVVYRRDAAVQHLEYASTLERLGLGDLSSPDSRARAADLGLAGGTLDSTGAQPRTPVLVSVDVTRRRGRLRLDGIVRTVITLGCFRCAEPAPQGIFANFSLLLTEDPVEEEPDLGTIFQEDDDKGGASLACAMDGDQDIDWDDRLHFPAADKEIDISKHIRDMIHLEITLDAVCNPNCKGLCLTCGANLNTTSSCTCKPRNVQGLSPLKGVFK.

The transit peptide at 1–42 directs the protein to the chloroplast; the sequence is MYYPQPTVSLAAAVALLRPSLRRHSQRASSLLRSSTPPPWVS.

Belongs to the DUF177 domain family. Highly expressed in shoots and leaves. Detected in roots, embryos and endosperm.

The protein resides in the plastid. It is found in the chloroplast. In terms of biological role, plays a role in synthesis, processing and/or stability of 23S rRNA. Required for embryogenesis. May be involved in RPL23 transcript levels regulation in non-photosynthetic plastids. This Zea mays (Maize) protein is Large ribosomal RNA subunit accumulation protein YCED homolog 1, chloroplastic.